Here is a 402-residue protein sequence, read N- to C-terminus: Phosphoglycerate kinase (402 aa).

Substrate-binding positions include Asp-24–Asn-26, Arg-40, His-63–Arg-66, Arg-122, and Arg-155. ATP contacts are provided by residues Lys-206, Gly-297, Glu-328, and Gly-357–Ser-360.

This sequence belongs to the phosphoglycerate kinase family. Monomer.

The protein resides in the cytoplasm. The enzyme catalyses (2R)-3-phosphoglycerate + ATP = (2R)-3-phospho-glyceroyl phosphate + ADP. It participates in carbohydrate degradation; glycolysis; pyruvate from D-glyceraldehyde 3-phosphate: step 2/5. The sequence is that of Phosphoglycerate kinase from Synechococcus elongatus (strain ATCC 33912 / PCC 7942 / FACHB-805) (Anacystis nidulans R2).